A 23-amino-acid polypeptide reads, in one-letter code: Dermaseptin-4 (23 aa).

The residue at position 23 (glutamine 23) is a Glutamine amide.

Expressed by the skin glands.

The protein localises to the secreted. Functionally, antimicrobial peptide, active against the Gram-positive bacterium S.aureus, and the Gram-negative bacteria E.coli and P.aeruginosa. Has hemolytic activity (5% hemolysis at 128 ug/ml). The polypeptide is Dermaseptin-4 (Phyllomedusa tarsius (Brownbelly leaf frog)).